The chain runs to 328 residues: Ferredoxin--NADP reductase (328 aa).

FAD is bound by residues Glu-34, Gln-42, Tyr-47, Val-87, Phe-120, Asp-283, and Thr-323.

It belongs to the ferredoxin--NADP reductase type 2 family. In terms of assembly, homodimer. It depends on FAD as a cofactor.

It catalyses the reaction 2 reduced [2Fe-2S]-[ferredoxin] + NADP(+) + H(+) = 2 oxidized [2Fe-2S]-[ferredoxin] + NADPH. The sequence is that of Ferredoxin--NADP reductase from Pediococcus pentosaceus (strain ATCC 25745 / CCUG 21536 / LMG 10740 / 183-1w).